The following is a 317-amino-acid chain: DNA-directed RNA polymerase subunit alpha 2 (317 aa).

The interval 1-227 (MALENLLHPT…NQLRNIVDIE (227 aa)) is alpha N-terminal domain (alpha-NTD). Positions 241–317 (INPILLKHVE…TLIENWPQDL (77 aa)) are alpha C-terminal domain (alpha-CTD).

This sequence belongs to the RNA polymerase alpha chain family. In terms of assembly, homodimer. The RNAP catalytic core consists of 2 alpha, 1 beta, 1 beta' and 1 omega subunit. When a sigma factor is associated with the core the holoenzyme is formed, which can initiate transcription.

It catalyses the reaction RNA(n) + a ribonucleoside 5'-triphosphate = RNA(n+1) + diphosphate. In terms of biological role, DNA-dependent RNA polymerase catalyzes the transcription of DNA into RNA using the four ribonucleoside triphosphates as substrates. This is DNA-directed RNA polymerase subunit alpha 2 from Francisella tularensis subsp. holarctica (strain LVS).